Reading from the N-terminus, the 121-residue chain is Small ribosomal subunit protein uS13 (121 aa).

Residues R90–K121 form a disordered region.

Belongs to the universal ribosomal protein uS13 family. Part of the 30S ribosomal subunit. Forms a loose heterodimer with protein S19. Forms two bridges to the 50S subunit in the 70S ribosome.

Its function is as follows. Located at the top of the head of the 30S subunit, it contacts several helices of the 16S rRNA. In the 70S ribosome it contacts the 23S rRNA (bridge B1a) and protein L5 of the 50S subunit (bridge B1b), connecting the 2 subunits; these bridges are implicated in subunit movement. Contacts the tRNAs in the A and P-sites. The polypeptide is Small ribosomal subunit protein uS13 (Lactiplantibacillus plantarum (strain ATCC BAA-793 / NCIMB 8826 / WCFS1) (Lactobacillus plantarum)).